The chain runs to 157 residues: Large ribosomal subunit protein eL24 (157 aa).

Residues 94–157 (RNQKPEVRKA…ISAPRVGGKR (64 aa)) are disordered. Over residues 96 to 117 (QKPEVRKAQREQAIRAAKESKK) the composition is skewed to basic and acidic residues. Positions 123–140 (KKPAAASAKTSAKTAQKP) are enriched in low complexity.

Belongs to the eukaryotic ribosomal protein eL24 family. In terms of assembly, component of the large ribosomal subunit.

Its subcellular location is the cytoplasm. Its function is as follows. Component of the large ribosomal subunit. The ribosome is a large ribonucleoprotein complex responsible for the synthesis of proteins in the cell. The polypeptide is Large ribosomal subunit protein eL24 (rpl24) (Gillichthys mirabilis (Long-jawed mudsucker)).